A 688-amino-acid chain; its full sequence is Potassium-transporting ATPase ATP-binding subunit (688 aa).

A run of 4 helical transmembrane segments spans residues 35–55, 62–82, 219–239, and 260–280; these read VMMV…VQFA, AVFS…ANLA, IALS…VVTL, and VLVA…LSAI. The active-site 4-aspartylphosphate intermediate is Asp313. Residues Asp350, Glu354, 383-390, and Lys401 contribute to the ATP site; that span reads FSAQTRMS. The Mg(2+) site is built by Asp524 and Asp528. 3 helical membrane passes run 594–614, 622–642, and 668–688; these read FAIL…LNLM, AILS…PLAL, and VVLP…MGWI.

Belongs to the cation transport ATPase (P-type) (TC 3.A.3) family. Type IA subfamily. In terms of assembly, the system is composed of three essential subunits: KdpA, KdpB and KdpC.

Its subcellular location is the cell inner membrane. It catalyses the reaction K(+)(out) + ATP + H2O = K(+)(in) + ADP + phosphate + H(+). Part of the high-affinity ATP-driven potassium transport (or Kdp) system, which catalyzes the hydrolysis of ATP coupled with the electrogenic transport of potassium into the cytoplasm. This subunit is responsible for energy coupling to the transport system and for the release of the potassium ions to the cytoplasm. The protein is Potassium-transporting ATPase ATP-binding subunit of Tolumonas auensis (strain DSM 9187 / NBRC 110442 / TA 4).